A 370-amino-acid chain; its full sequence is 4-hydroxy-3-methylbut-2-en-1-yl diphosphate synthase (flavodoxin) (370 aa).

[4Fe-4S] cluster is bound by residues Cys-268, Cys-271, Cys-303, and Glu-310.

This sequence belongs to the IspG family. [4Fe-4S] cluster serves as cofactor.

The enzyme catalyses (2E)-4-hydroxy-3-methylbut-2-enyl diphosphate + oxidized [flavodoxin] + H2O + 2 H(+) = 2-C-methyl-D-erythritol 2,4-cyclic diphosphate + reduced [flavodoxin]. The protein operates within isoprenoid biosynthesis; isopentenyl diphosphate biosynthesis via DXP pathway; isopentenyl diphosphate from 1-deoxy-D-xylulose 5-phosphate: step 5/6. Converts 2C-methyl-D-erythritol 2,4-cyclodiphosphate (ME-2,4cPP) into 1-hydroxy-2-methyl-2-(E)-butenyl 4-diphosphate. The chain is 4-hydroxy-3-methylbut-2-en-1-yl diphosphate synthase (flavodoxin) from Bacillus cereus (strain B4264).